The chain runs to 113 residues: Ribonuclease P protein component (113 aa).

The protein belongs to the RnpA family. As to quaternary structure, consists of a catalytic RNA component (M1 or rnpB) and a protein subunit.

It carries out the reaction Endonucleolytic cleavage of RNA, removing 5'-extranucleotides from tRNA precursor.. In terms of biological role, RNaseP catalyzes the removal of the 5'-leader sequence from pre-tRNA to produce the mature 5'-terminus. It can also cleave other RNA substrates such as 4.5S RNA. The protein component plays an auxiliary but essential role in vivo by binding to the 5'-leader sequence and broadening the substrate specificity of the ribozyme. The chain is Ribonuclease P protein component from Clostridium novyi (strain NT).